A 718-amino-acid chain; its full sequence is 1-deoxy-D-xylulose-5-phosphate synthase 1, chloroplastic (718 aa).

Residues Met1–Tyr55 constitute a chloroplast transit peptide. Thiamine diphosphate is bound by residues His143 and Gly184 to Ser186. Asp215 is a binding site for Mg(2+). Residues Gly216–Ala217, Asn244, Tyr365, and Glu447 contribute to the thiamine diphosphate site. Asn244 serves as a coordination point for Mg(2+).

This sequence belongs to the transketolase family. DXPS subfamily. In terms of assembly, homodimer. Mg(2+) is required as a cofactor. It depends on thiamine diphosphate as a cofactor. In terms of tissue distribution, expressed in trichomes, leaves, flowers, roots and stems.

The protein localises to the plastid. It localises to the chloroplast. The catalysed reaction is D-glyceraldehyde 3-phosphate + pyruvate + H(+) = 1-deoxy-D-xylulose 5-phosphate + CO2. The protein operates within metabolic intermediate biosynthesis; 1-deoxy-D-xylulose 5-phosphate biosynthesis; 1-deoxy-D-xylulose 5-phosphate from D-glyceraldehyde 3-phosphate and pyruvate: step 1/1. In terms of biological role, catalyzes the acyloin condensation reaction between C atoms 2 and 3 of pyruvate and glyceraldehyde 3-phosphate to yield 1-deoxy-D-xylulose-5-phosphate (DXP). This is 1-deoxy-D-xylulose-5-phosphate synthase 1, chloroplastic from Cannabis sativa (Hemp).